Here is a 331-residue protein sequence, read N- to C-terminus: Putative phosphoribosylaminoimidazole-succinocarboxamide synthase (331 aa).

It belongs to the SAICAR synthetase family. Highly divergent.

The enzyme catalyses 5-amino-1-(5-phospho-D-ribosyl)imidazole-4-carboxylate + L-aspartate + ATP = (2S)-2-[5-amino-1-(5-phospho-beta-D-ribosyl)imidazole-4-carboxamido]succinate + ADP + phosphate + 2 H(+). Its pathway is purine metabolism; IMP biosynthesis via de novo pathway; 5-amino-1-(5-phospho-D-ribosyl)imidazole-4-carboxamide from 5-amino-1-(5-phospho-D-ribosyl)imidazole-4-carboxylate: step 1/2. This Archaeoglobus fulgidus (strain ATCC 49558 / DSM 4304 / JCM 9628 / NBRC 100126 / VC-16) protein is Putative phosphoribosylaminoimidazole-succinocarboxamide synthase (purC).